A 342-amino-acid polypeptide reads, in one-letter code: Succinylglutamate desuccinylase (342 aa).

Positions 64, 67, and 159 each coordinate Zn(2+). The active site involves Glu-222.

The protein belongs to the AspA/AstE family. Succinylglutamate desuccinylase subfamily. Zn(2+) serves as cofactor.

The catalysed reaction is N-succinyl-L-glutamate + H2O = L-glutamate + succinate. Its pathway is amino-acid degradation; L-arginine degradation via AST pathway; L-glutamate and succinate from L-arginine: step 5/5. Transforms N(2)-succinylglutamate into succinate and glutamate. This is Succinylglutamate desuccinylase from Burkholderia orbicola (strain AU 1054).